The primary structure comprises 199 residues: Probable GTP-binding protein EngB (199 aa).

The region spanning 28–199 is the EngB-type G domain; sequence DLPEIALAGR…DSWDAILEQV (172 aa). GTP-binding positions include 36–43, 63–67, 81–84, 148–151, and 180–182; these read GRSNVGKS, GKTQL, DVPG, TKAD, and FSS. 2 residues coordinate Mg(2+): Ser-43 and Thr-65.

This sequence belongs to the TRAFAC class TrmE-Era-EngA-EngB-Septin-like GTPase superfamily. EngB GTPase family. Mg(2+) is required as a cofactor.

Functionally, necessary for normal cell division and for the maintenance of normal septation. The sequence is that of Probable GTP-binding protein EngB from Streptococcus pyogenes serotype M49 (strain NZ131).